Consider the following 189-residue polypeptide: Potassium-transporting ATPase KdpC subunit (189 aa).

Residues 11–31 (LFVLLTVITGVLYPVFVTGLA) form a helical membrane-spanning segment.

It belongs to the KdpC family. As to quaternary structure, the system is composed of three essential subunits: KdpA, KdpB and KdpC.

The protein resides in the cell inner membrane. Its function is as follows. Part of the high-affinity ATP-driven potassium transport (or Kdp) system, which catalyzes the hydrolysis of ATP coupled with the electrogenic transport of potassium into the cytoplasm. This subunit acts as a catalytic chaperone that increases the ATP-binding affinity of the ATP-hydrolyzing subunit KdpB by the formation of a transient KdpB/KdpC/ATP ternary complex. The chain is Potassium-transporting ATPase KdpC subunit from Polynucleobacter asymbioticus (strain DSM 18221 / CIP 109841 / QLW-P1DMWA-1) (Polynucleobacter necessarius subsp. asymbioticus).